A 486-amino-acid polypeptide reads, in one-letter code: Aspartyl/glutamyl-tRNA(Asn/Gln) amidotransferase subunit B (486 aa).

It belongs to the GatB/GatE family. GatB subfamily. As to quaternary structure, heterotrimer of A, B and C subunits.

The catalysed reaction is L-glutamyl-tRNA(Gln) + L-glutamine + ATP + H2O = L-glutaminyl-tRNA(Gln) + L-glutamate + ADP + phosphate + H(+). The enzyme catalyses L-aspartyl-tRNA(Asn) + L-glutamine + ATP + H2O = L-asparaginyl-tRNA(Asn) + L-glutamate + ADP + phosphate + 2 H(+). Allows the formation of correctly charged Asn-tRNA(Asn) or Gln-tRNA(Gln) through the transamidation of misacylated Asp-tRNA(Asn) or Glu-tRNA(Gln) in organisms which lack either or both of asparaginyl-tRNA or glutaminyl-tRNA synthetases. The reaction takes place in the presence of glutamine and ATP through an activated phospho-Asp-tRNA(Asn) or phospho-Glu-tRNA(Gln). This chain is Aspartyl/glutamyl-tRNA(Asn/Gln) amidotransferase subunit B, found in Leptospira interrogans serogroup Icterohaemorrhagiae serovar Lai (strain 56601).